The sequence spans 485 residues: Homospermidine synthase (485 aa).

This sequence belongs to the saccharopine dehydrogenase family. Requires NAD(+) as cofactor.

It carries out the reaction 2 putrescine = sym-homospermidine + NH4(+). It catalyses the reaction putrescine + spermidine = sym-homospermidine + propane-1,3-diamine. Involved in the NAD(+)-dependent synthesis of the polyamine homospermidine from putrescine. This chain is Homospermidine synthase (hss), found in Mesorhizobium japonicum (strain LMG 29417 / CECT 9101 / MAFF 303099) (Mesorhizobium loti (strain MAFF 303099)).